The chain runs to 545 residues: Phospholipase B-like 1 (545 aa).

A signal peptide spans 1 to 35 (MSRHSQDERLGLPQPPALLPLLLLLLAVAVPLSQA). An N-linked (GlcNAc...) (high mannose) asparagine; alternate glycan is attached at Asn-68. An N-linked (GlcNAc...) (hybrid) asparagine; alternate glycan is attached at Asn-68. A propeptide spans 206–224 (LSPTKNSSLKFFKRWDMGH) (removed in mature form). N-linked (GlcNAc...) (high mannose) asparagine; alternate glycans are attached at residues Asn-305, Asn-363, and Asn-408. Asn-305, Asn-363, and Asn-408 each carry an N-linked (GlcNAc...) (hybrid) asparagine; alternate glycan. 2 cysteine pairs are disulfide-bonded: Cys-467/Cys-472 and Cys-471/Cys-486. An N-linked (GlcNAc...) (high mannose) asparagine; alternate glycan is attached at Asn-523. Asn-523 carries an N-linked (GlcNAc...) (hybrid) asparagine; alternate glycan.

The protein belongs to the phospholipase B-like family. As to quaternary structure, may form a homodimer, each monomer is composed of a chain A and a chain B. In terms of processing, the maturation cleavages that produces chains A and B are required to open the putative substrate binding pocket. Both chains A and B remain associated in the mature protein.

It is found in the lysosome. In terms of biological role, exhibits a weak phospholipase activity, acting on various phospholipids, including phosphatidylcholine, phosphatidylinositol, phosphatidylethanolamine and lysophospholipids. However, in view of the small size of the putative binding pocket, it has been proposed that it may act rather as an amidase or a peptidase. The polypeptide is Phospholipase B-like 1 (PLBD1) (Bos taurus (Bovine)).